Reading from the N-terminus, the 187-residue chain is Putative manganese efflux pump MntP (187 aa).

The next 6 helical transmembrane spans lie at 3-23, 39-59, 65-85, 106-126, 129-149, and 166-186; these read YYTL…VSVG, IALC…YVGS, ISEF…INMI, LTML…SFAF, VNIW…SLFG, and LLGG…HRVF.

The protein belongs to the MntP (TC 9.B.29) family.

The protein localises to the cell inner membrane. Probably functions as a manganese efflux pump. This Actinobacillus succinogenes (strain ATCC 55618 / DSM 22257 / CCUG 43843 / 130Z) protein is Putative manganese efflux pump MntP.